Consider the following 218-residue polypeptide: MSSDGYPAPIFRGRRRGVLLALSSPSGAGKTTLSKRLLSQNPDVVLSVSATTRKPRPGEVDGQDYHFISVDEFKKKIEDDEFFEWAEVFGRYYGTPKTPVMEAVEDGRDVVFDIDWQGAQALAAAAPDDAVRVFILPPSLALLEDRLRKRGQDTTEIIKDRMARAKDEISHWHEYDYVIVNDDFARALEKLNEILHAERLKRLRHPWLEEFVDAIMEQ.

The 180-residue stretch at 17–196 (GVLLALSSPS…ALEKLNEILH (180 aa)) folds into the Guanylate kinase-like domain. An ATP-binding site is contributed by 24-31 (SPSGAGKT).

Belongs to the guanylate kinase family.

The protein resides in the cytoplasm. It catalyses the reaction GMP + ATP = GDP + ADP. Essential for recycling GMP and indirectly, cGMP. This chain is Guanylate kinase, found in Maricaulis maris (strain MCS10) (Caulobacter maris).